The sequence spans 3291 residues: Protocadherin-16 (3291 aa).

The signal sequence occupies residues 1–35; sequence MQEELSVALSCPGMKSLGTLLPLLVLLGTTVPGIR. At 36–2933 the chain is on the extracellular side; it reads GQAGSLDLQI…PDLNLLLVGA (2898 aa). Cadherin domains are found at residues 37–137, 138–249, 250–356, 369–466, 476–572, 573–679, 680–784, 785–888, 889–994, 995–1105, 1100–1205, 1218–1317, 1326–1429, 1430–1539, 1539–1642, 1643–1744, 1745–1848, 1849–1953, 1976–2061, 2062–2164, 2165–2270, 2270–2369, 2370–2475, 2476–2595, 2596–2699, 2700–2806, and 2807–2926; these read QAGS…APAF, PQAR…APAF, NQSR…QPSM, VSEA…APAF, LPEV…EPQF, QRTF…PPQF, YPRE…PPIF, EQLQ…SPAF, PAPE…APRF, DSPT…EPTF, SEEP…SPTF, IQVP…SPDL, VPVV…APAF, ARDP…APVF, FASP…APAF, PQQE…SPTF, GNTH…APAF, PVPS…APAF, LATL…GPRF, PRAN…APRF, LQPH…RPTI, IPQP…VPIF, SQSL…APSF, TLPH…PPVF, TRAS…GPAF, PLSL…DPVF, and LAPS…APDL. N-linked (GlcNAc...) asparagine glycosylation is present at Asn-396. Residues 951 to 971 form a disordered region; it reads GPPGGPPHELEVEAQDGGSPP. N-linked (GlcNAc...) asparagine glycosylation is present at Asn-1711. The N-linked (GlcNAc...) asparagine glycan is linked to Asn-2354. An N-linked (GlcNAc...) asparagine glycan is attached at Asn-2562. The helical transmembrane segment at 2934-2954 threads the bilayer; sequence VAASLGVVVVLALAALVLGLV. The Cytoplasmic portion of the chain corresponds to 2955-3291; the sequence is RARSRKAEAA…EPPDDTELRI (337 aa). Residues 2978-3033 are disordered; that stretch reads SLQKLGREPPSPPPSEHLYHQTLPSYGGPGAGGPYPRGGSLDPSHSSGRGSAEAAE. Residues 3004 to 3013 show a composition bias toward gly residues; that stretch reads GGPGAGGPYP. The residue at position 3048 (Ser-3048) is a Phosphoserine. Disordered stretches follow at residues 3051-3080 and 3226-3291; these read SSLAARGPDSGIQQDADGLSDTSCEPPAPD and ASHR…ELRI. Residues 3237–3259 are compositionally biased toward low complexity; the sequence is SLSSAAMSPSFSPSLSPLAARSP. The segment covering 3270–3279 has biased composition (polar residues); sequence PSASALSTES.

In terms of assembly, heterophilic interaction with FAT4; this interaction affects their respective protein levels.

The protein localises to the cell membrane. Calcium-dependent cell-adhesion protein. Mediates functions in neuroprogenitor cell proliferation and differentiation. This is Protocadherin-16 (Dchs1) from Rattus norvegicus (Rat).